The following is a 249-amino-acid chain: Large ribosomal subunit protein uL16m (249 aa).

The protein belongs to the universal ribosomal protein uL16 family. In terms of assembly, component of the mitochondrial large ribosomal subunit (mt-LSU). Mature N.crassa 74S mitochondrial ribosomes consist of a small (37S) and a large (54S) subunit. The 37S small subunit contains a 16S ribosomal RNA (16S mt-rRNA) and 32 different proteins. The 54S large subunit contains a 23S rRNA (23S mt-rRNA) and 42 different proteins.

Its subcellular location is the mitochondrion. Functionally, component of the mitochondrial ribosome (mitoribosome), a dedicated translation machinery responsible for the synthesis of mitochondrial genome-encoded proteins, including at least some of the essential transmembrane subunits of the mitochondrial respiratory chain. The mitoribosomes are attached to the mitochondrial inner membrane and translation products are cotranslationally integrated into the membrane. The protein is Large ribosomal subunit protein uL16m (mrpl16) of Neurospora crassa (strain ATCC 24698 / 74-OR23-1A / CBS 708.71 / DSM 1257 / FGSC 987).